The chain runs to 226 residues: Uridylate kinase (226 aa).

6-10 (KISGK) serves as a coordination point for ATP. G43 lines the UMP pocket. The ATP site is built by G44 and R48. UMP contacts are provided by residues D65 and 113–119 (FQPGQST). T139, N140, Y145, and D148 together coordinate ATP.

This sequence belongs to the UMP kinase family. Homohexamer.

It localises to the cytoplasm. The enzyme catalyses UMP + ATP = UDP + ADP. Its pathway is pyrimidine metabolism; CTP biosynthesis via de novo pathway; UDP from UMP (UMPK route): step 1/1. Inhibited by UTP. Functionally, catalyzes the reversible phosphorylation of UMP to UDP. In Sulfurisphaera tokodaii (strain DSM 16993 / JCM 10545 / NBRC 100140 / 7) (Sulfolobus tokodaii), this protein is Uridylate kinase.